Consider the following 411-residue polypeptide: Glutamate dehydrogenase (411 aa).

Residue K102 is part of the active site.

It belongs to the Glu/Leu/Phe/Val dehydrogenases family.

It catalyses the reaction L-glutamate + NAD(+) + H2O = 2-oxoglutarate + NH4(+) + NADH + H(+). It carries out the reaction L-glutamate + NADP(+) + H2O = 2-oxoglutarate + NH4(+) + NADPH + H(+). This Zea mays (Maize) protein is Glutamate dehydrogenase (GDH1).